A 565-amino-acid chain; its full sequence is Arginine--tRNA ligase (565 aa).

Residues A128 to H138 carry the 'HIGH' region motif.

Belongs to the class-I aminoacyl-tRNA synthetase family. Monomer.

Its subcellular location is the cytoplasm. The enzyme catalyses tRNA(Arg) + L-arginine + ATP = L-arginyl-tRNA(Arg) + AMP + diphosphate. The protein is Arginine--tRNA ligase of Delftia acidovorans (strain DSM 14801 / SPH-1).